Here is a 932-residue protein sequence, read N- to C-terminus: Ribosome biogenesis protein ERB1 (932 aa).

Over residues 1–18 the composition is skewed to low complexity; that stretch reads MVRPSSSSSASASAARSG. The disordered stretch occupies residues 1–229; sequence MVRPSSSSSA…RSQAAQAFDL (229 aa). A compositionally biased stretch (polar residues) spans 27–36; it reads PTATNPTTRA. 2 stretches are compositionally biased toward acidic residues: residues 57–119 and 150–172; these read VSDD…EVDS and DNSD…DEDE. The segment covering 175–184 has biased composition (low complexity); the sequence is SAFAARSDAS. WD repeat units follow at residues 555 to 594 and 604 to 644; these read PDGG…CTAS and AERS…NYAK. The disordered stretch occupies residues 679–698; that stretch reads SMPSKPDARSPVAWTRPSEA. WD repeat units follow at residues 762–800, 803–842, 846–885, and 901–932; these read SKGS…LIKT, SGFK…RPYK, YHAR…DYGE, and KNGL…LWTT.

It belongs to the WD repeat BOP1/ERB1 family. As to quaternary structure, component of the NOP7 complex, composed of ERB1, NOP7 and YTM1. The complex is held together by ERB1, which interacts with NOP7 via its N-terminal domain and with YTM1 via a high-affinity interaction between the seven-bladed beta-propeller domains of the 2 proteins. The NOP7 complex associates with the 66S pre-ribosome.

It is found in the nucleus. The protein localises to the nucleolus. It localises to the nucleoplasm. Functionally, component of the NOP7 complex, which is required for maturation of the 25S and 5.8S ribosomal RNAs and formation of the 60S ribosome. This is Ribosome biogenesis protein ERB1 from Mycosarcoma maydis (Corn smut fungus).